The chain runs to 122 residues: Large ribosomal subunit protein uL14 (122 aa).

Belongs to the universal ribosomal protein uL14 family. Part of the 50S ribosomal subunit. Forms a cluster with proteins L3 and L19. In the 70S ribosome, L14 and L19 interact and together make contacts with the 16S rRNA in bridges B5 and B8.

In terms of biological role, binds to 23S rRNA. Forms part of two intersubunit bridges in the 70S ribosome. The polypeptide is Large ribosomal subunit protein uL14 (Hahella chejuensis (strain KCTC 2396)).